The following is a 178-amino-acid chain: Large ribosomal subunit protein uL5 (178 aa).

Belongs to the universal ribosomal protein uL5 family. As to quaternary structure, part of the 50S ribosomal subunit; part of the 5S rRNA/L5/L18/L25 subcomplex. Contacts the 5S rRNA and the P site tRNA. Forms a bridge to the 30S subunit in the 70S ribosome.

Its function is as follows. This is one of the proteins that bind and probably mediate the attachment of the 5S RNA into the large ribosomal subunit, where it forms part of the central protuberance. In the 70S ribosome it contacts protein S13 of the 30S subunit (bridge B1b), connecting the 2 subunits; this bridge is implicated in subunit movement. Contacts the P site tRNA; the 5S rRNA and some of its associated proteins might help stabilize positioning of ribosome-bound tRNAs. This Acinetobacter baylyi (strain ATCC 33305 / BD413 / ADP1) protein is Large ribosomal subunit protein uL5.